The following is a 90-amino-acid chain: Protein LIM1 (90 aa).

Residues 1-26 form the signal peptide; it reads MASMKSLATAILVVLLLAALSREGRS. 4 disulfide bridges follow: Cys-29–Cys-66, Cys-39–Cys-55, Cys-56–Cys-81, and Cys-68–Cys-88.

The protein belongs to the A9/FIL1 family.

The protein localises to the secreted. The polypeptide is Protein LIM1 (LIM1) (Lilium longiflorum (Trumpet lily)).